Reading from the N-terminus, the 293-residue chain is MKI67 FHA domain-interacting nucleolar phosphoprotein (293 aa).

The residue at position 2 (Ala-2) is an N-acetylalanine. Residue Lys-38 forms a Glycyl lysine isopeptide (Lys-Gly) (interchain with G-Cter in SUMO2) linkage. One can recognise an RRM domain in the interval 45–123 (GVVYVRHLPN…RLLECHFMPP (79 aa)). Position 114 is an omega-N-methylarginine; by PRMT1 and PRMT8 (Arg-114). A Glycyl lysine isopeptide (Lys-Gly) (interchain with G-Cter in SUMO2) cross-link involves residue Lys-139. Phosphoserine is present on Ser-145. Glycyl lysine isopeptide (Lys-Gly) (interchain with G-Cter in SUMO2) cross-links involve residues Lys-179 and Lys-192. Over residues 197-207 (SKTNRQTSTKG) the composition is skewed to polar residues. The segment at 197–239 (SKTNRQTSTKGQVLRKKKKKVSGTLDTPEKTVDSQGPTPVCTP) is disordered. At Ser-218 the chain carries Phosphoserine. The residue at position 223 (Thr-223) is a Phosphothreonine. Residues 226–269 (KTVDSQGPTPVCTPTFLERRKSQVAELNDDDKDDEIVFKQPISC) form an interaction with MKI67 region. Ser-230 is subject to Phosphoserine. A phosphothreonine mark is found at Thr-234 and Thr-238. Arg-244 and Arg-245 each carry omega-N-methylated arginine; by PRMT1 and PRMT8. Ser-247 is modified (phosphoserine). A Glycyl lysine isopeptide (Lys-Gly) (interchain with G-Cter in SUMO1); alternate cross-link involves residue Lys-271. A Glycyl lysine isopeptide (Lys-Gly) (interchain with G-Cter in SUMO2); alternate cross-link involves residue Lys-271. The disordered stretch occupies residues 271 to 293 (KEEIQETQTPTHSRKKRRRSSNQ). Thr-279 carries the phosphothreonine modification. The span at 282–293 (HSRKKRRRSSNQ) shows a compositional bias: basic residues. Arg-284 is modified (omega-N-methylarginine; by PRMT1 and PRMT8).

In terms of assembly, binds to the FHA domain of MKI67; this interaction is enhanced in mitosis. Post-translationally, sequentially phosphorylated on Thr-238, Thr-234 and Ser-230. Thr-234 is phosphorylated only when Thr-238 is phosphorylated. Likewise, phosphorylation at Ser-230 requires that Thr-234 and Thr-238 are phosphorylated. Phosphorylation enhances MKI67 binding.

It is found in the nucleus. It localises to the nucleolus. The protein localises to the chromosome. In Homo sapiens (Human), this protein is MKI67 FHA domain-interacting nucleolar phosphoprotein (NIFK).